Here is a 105-residue protein sequence, read N- to C-terminus: Large ribosomal subunit protein uL24 (105 aa).

Belongs to the universal ribosomal protein uL24 family. Part of the 50S ribosomal subunit.

Its function is as follows. One of two assembly initiator proteins, it binds directly to the 5'-end of the 23S rRNA, where it nucleates assembly of the 50S subunit. Functionally, one of the proteins that surrounds the polypeptide exit tunnel on the outside of the subunit. The chain is Large ribosomal subunit protein uL24 from Pseudothermotoga lettingae (strain ATCC BAA-301 / DSM 14385 / NBRC 107922 / TMO) (Thermotoga lettingae).